Here is a 309-residue protein sequence, read N- to C-terminus: uncharacterized protein (309 aa).

The span at 1 to 11 (MPGNSRRRGAV) shows a compositional bias: basic residues. Positions 1-69 (MPGNSRRRGA…PVKRTDETET (69 aa)) are disordered. The S-adenosyl-L-methionine site is built by Gly-261, Ile-281, and Leu-290.

The protein belongs to the class IV-like SAM-binding methyltransferase superfamily. RNA methyltransferase TrmH family.

This is an uncharacterized protein from Mycobacterium leprae (strain TN).